The following is a 202-amino-acid chain: Na(+)-translocating NADH-quinone reductase subunit E (202 aa).

6 helical membrane-spanning segments follow: residues 11–31 (AVFI…FLAV), 35–55 (VTTS…SVPV), 81–101 (FLRF…LEMA), 114–134 (GIFL…SFMV), 144–164 (VVYG…LAGI), and 180–200 (LGIT…FSGI).

It belongs to the NqrDE/RnfAE family. In terms of assembly, composed of six subunits; NqrA, NqrB, NqrC, NqrD, NqrE and NqrF.

It is found in the cell inner membrane. It carries out the reaction a ubiquinone + n Na(+)(in) + NADH + H(+) = a ubiquinol + n Na(+)(out) + NAD(+). Its function is as follows. NQR complex catalyzes the reduction of ubiquinone-1 to ubiquinol by two successive reactions, coupled with the transport of Na(+) ions from the cytoplasm to the periplasm. NqrA to NqrE are probably involved in the second step, the conversion of ubisemiquinone to ubiquinol. The protein is Na(+)-translocating NADH-quinone reductase subunit E of Pseudoalteromonas translucida (strain TAC 125).